Reading from the N-terminus, the 328-residue chain is DNA polymerase III subunit delta' (328 aa).

As to quaternary structure, DNA polymerase III contains a core (composed of alpha, epsilon and theta chains) that associates with a tau subunit. This core dimerizes to form the POLIII' complex. PolIII' associates with the gamma complex (composed of gamma, delta, delta', psi and chi chains) and with the beta chain to form the complete DNA polymerase III complex.

The enzyme catalyses DNA(n) + a 2'-deoxyribonucleoside 5'-triphosphate = DNA(n+1) + diphosphate. Its function is as follows. DNA polymerase III is a complex, multichain enzyme responsible for most of the replicative synthesis in bacteria. This DNA polymerase also exhibits 3' to 5' exonuclease activity. The chain is DNA polymerase III subunit delta' (holB) from Pseudomonas aeruginosa (strain ATCC 15692 / DSM 22644 / CIP 104116 / JCM 14847 / LMG 12228 / 1C / PRS 101 / PAO1).